Reading from the N-terminus, the 509-residue chain is Butyrophilin-like protein 1 (509 aa).

The signal sequence occupies residues M1–G27. Ig-like V-type domains follow at residues E28–S139 and P151–L237. Residues E28–K250 are Extracellular-facing. 2 disulfide bridges follow: C53/C127 and C167/C221. A helical transmembrane segment spans residues V251–I271. Over W272–P509 the chain is Cytoplasmic. Residues R316–P509 enclose the B30.2/SPRY domain. The segment at M349 to Q372 is disordered. The segment covering D351–E366 has biased composition (basic and acidic residues).

This sequence belongs to the immunoglobulin superfamily. BTN/MOG family.

The protein resides in the membrane. In Mus musculus (Mouse), this protein is Butyrophilin-like protein 1 (Btnl1).